The primary structure comprises 134 residues: Photosystem II lipoprotein Psb27 (134 aa).

A signal peptide spans 1–24 (MSFLKNQLSRLLALILVVAIGLTA). The N-palmitoyl cysteine moiety is linked to residue Cys25. Cys25 carries the S-diacylglycerol cysteine lipid modification.

The protein belongs to the Psb27 family. In terms of assembly, monomer. Forms a complex with a monomeric, partially assembled PSII. This is probably the complex in which D1 is assembled and/or replaced. Present in 6-10% of PSII complexes; mostly in monomeric PSII. These PSII do not evolve oxygen, do not have an assembled calcium-manganese-oxide cluster. Psb27-containing PSII seem to be assembly intermediates; a wild-type strain includes the intrinsic membrane proteins, Psb27, Pbs28, substoichiometric amounts of PsbO and PsbQ but no PsbU or PsbV, while a ctpA deletion mutant includes the intrinsic membrane proteins (D1 as precursor), Psb27, a very low amount of PsbO and PsbQ, but no PsbU or PsbV. Small amounts of Psb27 interact with the lumenal domain of CP43 (psbC) in wild-type and a ctpA mutant. A small amount can also be detected in monomeric and trimeric photosystem I (PSI), possibly via association with PsaB.

The protein resides in the cellular thylakoid membrane. In terms of biological role, plays a role in the repair and/or biogenesis of the calcium-manganese-oxide cluster on the lumenal face of the thylakoid membrane. Photosystem II (PSII) complexes containing this protein are monomeric, are assembly intermediates lacking the calcium-manganese-oxide cluster and miss some of the lumenal subunits. Probably blocks binding of some of the small lumenal subunits. The polypeptide is Photosystem II lipoprotein Psb27 (Synechocystis sp. (strain ATCC 27184 / PCC 6803 / Kazusa)).